The following is a 72-amino-acid chain: Cytochrome c oxidase subunit 8C, mitochondrial (72 aa).

The N-terminal 29 residues, 1–29, are a transit peptide targeting the mitochondrion; it reads MSRLLLLCSSLLRHRAVLFSKPGHPGRLS. At 30–40 the chain is on the mitochondrial matrix side; sequence HSESPQKKILS. The helical transmembrane segment at 41-64 threads the bilayer; the sequence is PTESAVGIVVFFTTFYIPAAYVLS. At 65 to 72 the chain is on the mitochondrial intermembrane side; sequence SLKYFKGE.

Belongs to the cytochrome c oxidase VIII family. As to quaternary structure, component of the cytochrome c oxidase (complex IV, CIV), a multisubunit enzyme composed of 14 subunits. The complex is composed of a catalytic core of 3 subunits MT-CO1, MT-CO2 and MT-CO3, encoded in the mitochondrial DNA, and 11 supernumerary subunits COX4I, COX5A, COX5B, COX6A, COX6B, COX6C, COX7A, COX7B, COX7C, COX8 and NDUFA4, which are encoded in the nuclear genome. The complex exists as a monomer or a dimer and forms supercomplexes (SCs) in the inner mitochondrial membrane with NADH-ubiquinone oxidoreductase (complex I, CI) and ubiquinol-cytochrome c oxidoreductase (cytochrome b-c1 complex, complex III, CIII), resulting in different assemblies (supercomplex SCI(1)III(2)IV(1) and megacomplex MCI(2)III(2)IV(2)).

Its subcellular location is the mitochondrion inner membrane. The protein operates within energy metabolism; oxidative phosphorylation. In terms of biological role, component of the cytochrome c oxidase, the last enzyme in the mitochondrial electron transport chain which drives oxidative phosphorylation. The respiratory chain contains 3 multisubunit complexes succinate dehydrogenase (complex II, CII), ubiquinol-cytochrome c oxidoreductase (cytochrome b-c1 complex, complex III, CIII) and cytochrome c oxidase (complex IV, CIV), that cooperate to transfer electrons derived from NADH and succinate to molecular oxygen, creating an electrochemical gradient over the inner membrane that drives transmembrane transport and the ATP synthase. Cytochrome c oxidase is the component of the respiratory chain that catalyzes the reduction of oxygen to water. Electrons originating from reduced cytochrome c in the intermembrane space (IMS) are transferred via the dinuclear copper A center (CU(A)) of subunit 2 and heme A of subunit 1 to the active site in subunit 1, a binuclear center (BNC) formed by heme A3 and copper B (CU(B)). The BNC reduces molecular oxygen to 2 water molecules using 4 electrons from cytochrome c in the IMS and 4 protons from the mitochondrial matrix. This chain is Cytochrome c oxidase subunit 8C, mitochondrial (Cox8c), found in Mus musculus (Mouse).